The sequence spans 330 residues: Malate dehydrogenase (330 aa).

Residue 15–21 coordinates NAD(+); it reads GGTGQIA. Residues Arg-96 and Arg-102 each coordinate substrate. Residues Asn-109, Gln-116, and 133–135 contribute to the NAD(+) site; that span reads VGN. Substrate-binding residues include Asn-135 and Arg-166. His-191 (proton acceptor) is an active-site residue.

It belongs to the LDH/MDH superfamily. MDH type 2 family.

It carries out the reaction (S)-malate + NAD(+) = oxaloacetate + NADH + H(+). Functionally, catalyzes the reversible oxidation of malate to oxaloacetate. The protein is Malate dehydrogenase of Chlamydia caviae (strain ATCC VR-813 / DSM 19441 / 03DC25 / GPIC) (Chlamydophila caviae).